A 304-amino-acid polypeptide reads, in one-letter code: Cell surface-binding protein OPG105 (304 aa).

The 235-residue stretch at 1-235 (MPQQLSPINI…NDDTQVYYSG (235 aa)) folds into the Alpha-carbonic anhydrase domain. At 1 to 275 (MPQQLSPINI…YQKYIEGNKT (275 aa)) the chain is on the virion surface side. Residues 276–294 (FAIIAIVFVFILTAILFLM) form a helical membrane-spanning segment. The Intravirion portion of the chain corresponds to 295 to 304 (SQRYSREKQN).

Belongs to the alpha-carbonic anhydrase family. As to quaternary structure, homodimer; disulfide-linked. In terms of processing, apparently non-glycosylated.

It localises to the virion membrane. Binds to chondroitin sulfate on the cell surface to provide virion attachment to target cell. This is Cell surface-binding protein OPG105 (OPG105) from Monkeypox virus (strain Zaire-96-I-16) (MPX).